A 203-amino-acid polypeptide reads, in one-letter code: Holliday junction branch migration complex subunit RuvA (203 aa).

A domain I region spans residues 1–64 (MIGRLRGIIL…EDAQLLYGFN (64 aa)). The domain II stretch occupies residues 65 to 142 (NKQERMLFRE…KGLHGDLFTP (78 aa)). The interval 143–154 (AADLVLTSPNGP) is flexible linker. A domain III region spans residues 155–203 (TSDDAEQEAVAALVALGYKPQEASRMVSKIAKPDANSETLIREALRAAL).

Belongs to the RuvA family. In terms of assembly, homotetramer. Forms an RuvA(8)-RuvB(12)-Holliday junction (HJ) complex. HJ DNA is sandwiched between 2 RuvA tetramers; dsDNA enters through RuvA and exits via RuvB. An RuvB hexamer assembles on each DNA strand where it exits the tetramer. Each RuvB hexamer is contacted by two RuvA subunits (via domain III) on 2 adjacent RuvB subunits; this complex drives branch migration. In the full resolvosome a probable DNA-RuvA(4)-RuvB(12)-RuvC(2) complex forms which resolves the HJ.

Its subcellular location is the cytoplasm. Its function is as follows. The RuvA-RuvB-RuvC complex processes Holliday junction (HJ) DNA during genetic recombination and DNA repair, while the RuvA-RuvB complex plays an important role in the rescue of blocked DNA replication forks via replication fork reversal (RFR). RuvA specifically binds to HJ cruciform DNA, conferring on it an open structure. The RuvB hexamer acts as an ATP-dependent pump, pulling dsDNA into and through the RuvAB complex. HJ branch migration allows RuvC to scan DNA until it finds its consensus sequence, where it cleaves and resolves the cruciform DNA. This Enterobacter sp. (strain 638) protein is Holliday junction branch migration complex subunit RuvA.